The primary structure comprises 264 residues: Thymidylate synthase (264 aa).

A dUMP-binding site is contributed by arginine 21. Residue histidine 51 coordinates (6R)-5,10-methylene-5,6,7,8-tetrahydrofolate. A dUMP-binding site is contributed by 126–127 (RR). Cysteine 146 functions as the Nucleophile in the catalytic mechanism. Residues 166–169 (RSAD), asparagine 177, and 207–209 (HIY) contribute to the dUMP site. Aspartate 169 serves as a coordination point for (6R)-5,10-methylene-5,6,7,8-tetrahydrofolate. Residue alanine 263 participates in (6R)-5,10-methylene-5,6,7,8-tetrahydrofolate binding.

It belongs to the thymidylate synthase family. Bacterial-type ThyA subfamily. As to quaternary structure, homodimer.

It is found in the cytoplasm. It carries out the reaction dUMP + (6R)-5,10-methylene-5,6,7,8-tetrahydrofolate = 7,8-dihydrofolate + dTMP. Its pathway is pyrimidine metabolism; dTTP biosynthesis. Functionally, catalyzes the reductive methylation of 2'-deoxyuridine-5'-monophosphate (dUMP) to 2'-deoxythymidine-5'-monophosphate (dTMP) while utilizing 5,10-methylenetetrahydrofolate (mTHF) as the methyl donor and reductant in the reaction, yielding dihydrofolate (DHF) as a by-product. This enzymatic reaction provides an intracellular de novo source of dTMP, an essential precursor for DNA biosynthesis. The polypeptide is Thymidylate synthase (Brucella anthropi (strain ATCC 49188 / DSM 6882 / CCUG 24695 / JCM 21032 / LMG 3331 / NBRC 15819 / NCTC 12168 / Alc 37) (Ochrobactrum anthropi)).